Here is a 126-residue protein sequence, read N- to C-terminus: Protein ApaG (126 aa).

The ApaG domain maps to 2-126 (SDPRYQIDVS…FRLAVPGALH (125 aa)).

The sequence is that of Protein ApaG from Ectopseudomonas mendocina (strain ymp) (Pseudomonas mendocina).